The chain runs to 5154 residues: Hydrocephalus-inducing protein (5154 aa).

The tract at residues 409–800 (MILEDSVLDP…VLLSSPSPCG (392 aa)) is interaction with KIF9. The span at 997–1009 (RPKEKQSKKEPGK) shows a compositional bias: basic and acidic residues. Disordered stretches follow at residues 997–1033 (RPKE…GNPV), 1966–1988 (ENEE…TSIS), 2193–2222 (ADSH…SPLL), 2383–2423 (KLQQ…QGAT), 2521–2572 (HTGT…KAER), and 2706–2762 (KAQE…DIDQ). Residues 1010 to 1024 (KGSTSSSRRQSKASQ) show a composition bias toward low complexity. A coiled-coil region spans residues 1948–1977 (EMKKSKEEHMKAKYMENLENEEEEMNTSDQ). 2 stretches are compositionally biased toward polar residues: residues 1974–1988 (TSDQ…TSIS) and 2209–2220 (SETPQVQISSSP). A coiled-coil region spans residues 2308–2444 (YVVMKAQEKA…LKMESIERKV (137 aa)). Composition is skewed to basic and acidic residues over residues 2383–2398 (KLQQ…DELK), 2523–2535 (GTDE…DDQR), 2548–2572 (KDRE…KAER), and 2721–2734 (KLKD…ETQK). The stretch at 2543–2588 (GRKGRKDRERERLEKERAEKERLEREKAERERLEKLKALEERSDVE) forms a coiled coil.

As to quaternary structure, interacts with KIF9. Expressed in brain and testis. Expressed in ciliated epithelial cells lining bronchi and oviduct, and in spermatocytes.

It localises to the cell projection. The protein resides in the cilium. The protein localises to the cytoplasm. It is found in the cytoskeleton. Its subcellular location is the cilium axoneme. It localises to the flagellum. Its function is as follows. Required for ciliary motility. The sequence is that of Hydrocephalus-inducing protein (Hydin) from Mus musculus (Mouse).